A 1321-amino-acid chain; its full sequence is Adhesion G protein-coupled receptor A3 (1321 aa).

A signal peptide spans 1-33 (MEPPGRRRGRAQPPLLLPLSLLALLALLGGGGG). Over 34-761 (GGAAALPAGC…YTQAASLLHP (728 aa)) the chain is Extracellular. Asn-81 and Asn-98 each carry an N-linked (GlcNAc...) asparagine glycan. LRR repeat units follow at residues 82 to 103 (RTVT…SFSG), 106 to 127 (LLER…AFWG), 130 to 151 (SLKR…IFRG), and 154 to 175 (NLVR…TFDY). Asn-159, Asn-206, Asn-301, Asn-332, Asn-433, Asn-453, and Asn-592 each carry an N-linked (GlcNAc...) asparagine glycan. Residues 187–237 (EYLLCDCNILWMHRWVKEKNITVRDTRCVYPKSLQAQPVTGVKQELLTCDP) enclose the LRRCT domain. Positions 242-340 (PSFYMTPSHR…GNNTRTVDIV (99 aa)) constitute an Ig-like domain. A disulfide bridge connects residues Cys-264 and Cys-324. Residues 583-750 (LDKQLSFKCN…AVLMDLTGSE (168 aa)) enclose the GAIN-B domain. The stretch at 594–620 (SNTFSSLALKNTIVEASIQLPPSLFSP) is one LRR 5 repeat. N-linked (GlcNAc...) asparagine glycans are attached at residues Asn-652, Asn-687, and Asn-728. Residues 701-750 (AARWDFDLLNGQGGWKSDGCHILYSDENITTIQCYSLSNYAVLMDLTGSE) form a GPS region. Cys-720 and Cys-734 are oxidised to a cystine. The chain crosses the membrane as a helical span at residues 762–782 (VVYTTAIILLLCLLAVIVSYI). The Cytoplasmic portion of the chain corresponds to 783 to 796 (YHHSLIRISLKSWH). Residues 797–817 (MLVNLCFHIFLTCVVFVGGIT) traverse the membrane as a helical segment. At 818 to 826 (QTRNASICQ) the chain is on the extracellular side. Asn-821 is a glycosylation site (N-linked (GlcNAc...) asparagine). A helical transmembrane segment spans residues 827–847 (AVGIILHYSTLATVLWVGVTA). At 848-876 (RNIYKQVTKKAKRCQDPDEPPPPPRPMLR) the chain is on the cytoplasmic side. A helical transmembrane segment spans residues 877–897 (FYLIGGGIPIIVCGITAAANI). The Extracellular portion of the chain corresponds to 898-919 (KNYGSRPNAPYCWMAWEPSLGA). Residues 920 to 940 (FYGPASFITFVNCMYFLSIFI) traverse the membrane as a helical segment. The Cytoplasmic portion of the chain corresponds to 941–996 (QLKRHPERKYELKEPTEEQQRLAANENGEINHQDSMSLSLISTSALENEHTFHSQL). Residues 997–1017 (LGASLTLLLYVALWMFGALAV) form a helical membrane-spanning segment. Over 1018 to 1024 (SLYYPLD) the chain is Extracellular. A helical transmembrane segment spans residues 1025–1045 (LVFSFVFGATSLSFSAFFVVH). The Cytoplasmic segment spans residues 1046-1321 (HCVNREDVRL…TGLWKHETTV (276 aa)). A compositionally biased stretch (polar residues) spans 1073 to 1083 (NVQPPNSNGTN). Disordered regions lie at residues 1073 to 1094 (NVQP…NSSA), 1198 to 1219 (VEGS…GHSR), 1231 to 1265 (QYNP…KKDA), and 1294 to 1321 (SNGQ…ETTV). The span at 1233-1250 (NPPQQDSSDACSTLPKSS) shows a compositional bias: polar residues. The short motif at 1319 to 1321 (TTV) is the PDZ-binding element.

This sequence belongs to the G-protein coupled receptor 2 family. Adhesion G-protein coupled receptor (ADGR) subfamily. In terms of assembly, interacts (via PDZ-binding motif) with DLG1.

The protein resides in the membrane. Orphan receptor that may have a role in planar cell polarity pathway. The protein is Adhesion G protein-coupled receptor A3 of Homo sapiens (Human).